Consider the following 147-residue polypeptide: UPF0178 protein Patl_1318 (147 aa).

This sequence belongs to the UPF0178 family.

The chain is UPF0178 protein Patl_1318 from Pseudoalteromonas atlantica (strain T6c / ATCC BAA-1087).